The sequence spans 509 residues: Glycerol kinase (509 aa).

An ADP-binding site is contributed by T17. Residues T17, T18, and S19 each contribute to the ATP site. T17 contacts sn-glycerol 3-phosphate. R21 is an ADP binding site. Residues R87, E88, Y139, and D256 each contribute to the sn-glycerol 3-phosphate site. Glycerol contacts are provided by R87, E88, Y139, D256, and Q257. ADP contacts are provided by T278 and G322. Positions 278, 322, 326, and 423 each coordinate ATP. 2 residues coordinate ADP: A423 and N427.

Belongs to the FGGY kinase family.

The enzyme catalyses glycerol + ATP = sn-glycerol 3-phosphate + ADP + H(+). It participates in polyol metabolism; glycerol degradation via glycerol kinase pathway; sn-glycerol 3-phosphate from glycerol: step 1/1. Inhibited by fructose 1,6-bisphosphate (FBP). In terms of biological role, key enzyme in the regulation of glycerol uptake and metabolism. Catalyzes the phosphorylation of glycerol to yield sn-glycerol 3-phosphate. In Corynebacterium glutamicum (strain R), this protein is Glycerol kinase.